Here is a 122-residue protein sequence, read N- to C-terminus: Holo-[acyl-carrier-protein] synthase (122 aa).

Residues Asp-8 and Glu-57 each contribute to the Mg(2+) site.

Belongs to the P-Pant transferase superfamily. AcpS family. Requires Mg(2+) as cofactor.

It localises to the cytoplasm. It carries out the reaction apo-[ACP] + CoA = holo-[ACP] + adenosine 3',5'-bisphosphate + H(+). Functionally, transfers the 4'-phosphopantetheine moiety from coenzyme A to a Ser of acyl-carrier-protein. This is Holo-[acyl-carrier-protein] synthase from Protochlamydia amoebophila (strain UWE25).